The following is a 201-amino-acid chain: Protein TV1384 (201 aa).

In terms of domain architecture, AMMECR1 spans 11–200 (DIGAKAVMLA…EIEPNGKVEQ (190 aa)).

The sequence is that of Protein TV1384 from Thermoplasma volcanium (strain ATCC 51530 / DSM 4299 / JCM 9571 / NBRC 15438 / GSS1).